Here is a 347-residue protein sequence, read N- to C-terminus: NADH-ubiquinone oxidoreductase chain 2 (347 aa).

10 consecutive transmembrane segments (helical) span residues 3–23, 25–45, 66–86, 111–131, 149–169, 178–198, 201–221, 237–257, 274–294, and 325–345; these read PPIL…VMLS, HWLL…PILM, ASML…QWVI, FHFW…MILL, INTN…GWGG, IMAY…TYNP, MVLN…LFML, FPLI…LPPL, NMII…YFYL, and LLPP…MLSV.

It belongs to the complex I subunit 2 family. As to quaternary structure, core subunit of respiratory chain NADH dehydrogenase (Complex I) which is composed of 45 different subunits. Interacts with TMEM242.

It localises to the mitochondrion inner membrane. The enzyme catalyses a ubiquinone + NADH + 5 H(+)(in) = a ubiquinol + NAD(+) + 4 H(+)(out). Its function is as follows. Core subunit of the mitochondrial membrane respiratory chain NADH dehydrogenase (Complex I) which catalyzes electron transfer from NADH through the respiratory chain, using ubiquinone as an electron acceptor. Essential for the catalytic activity and assembly of complex I. This is NADH-ubiquinone oxidoreductase chain 2 from Canis lupus familiaris (Dog).